The primary structure comprises 473 residues: MTPVIALVGRPNVGKSTLFNQMTRSRDALVADFPGLTRDRKYGEGNYEGQKFIVIDTGGLTGDEAGIDAEMARQSMQAVEEADIVLFLVDGRAGLTAGDEMIADYLRKSGKQAHLVVNKTDGQDPDVAAADFYSLGFESTFLIAAAHNRGILSLLEALLPEPENPEDQDRADRYPGIRIGVVGRPNVGKSTLVNRMLGEDRVVVYDMPGTTRDSVYIPYERQGHEYTLIDTAGVRRRKNVREAVEKFSIIKTLQAIDDAHVVILVIDAREGLVDQDLHLIGFVLDAGRSLVIAINKWDGMDPEDRDRVKEQVARRLDFLDYADKYYISALHGTGVGTMYESVQACYESAMSKWPTNRLTAILQDAVAQHQPPMVHGRRIKLRYAHQGGSNPPVVVVHGNQVDSLPGAYKRYLENTFRKVLKVVGAPIRFEFKSGENPFATKVDRLTPRQKVKKDNDLKKGRRIKKTRQKSVKR.

2 consecutive EngA-type G domains span residues P3–E166 and I177–M350. GTP-binding positions include G9–S16, D56–L60, N118–D121, G183–S190, D230–V234, and N295–D298. Positions S351 to E435 constitute a KH-like domain. A compositionally biased stretch (basic and acidic residues) spans R444–K458. The interval R444–R473 is disordered. Positions K459–R473 are enriched in basic residues.

The protein belongs to the TRAFAC class TrmE-Era-EngA-EngB-Septin-like GTPase superfamily. EngA (Der) GTPase family. In terms of assembly, associates with the 50S ribosomal subunit.

GTPase that plays an essential role in the late steps of ribosome biogenesis. The chain is GTPase Der from Marinobacter nauticus (strain ATCC 700491 / DSM 11845 / VT8) (Marinobacter aquaeolei).